A 144-amino-acid polypeptide reads, in one-letter code: Bradykinin-potentiating and C-type natriuretic peptides isoform 2 (144 aa).

Positions 1-23 are cleaved as a signal peptide; the sequence is MVLSRLAASGLLLLALLALSVDG. Positions 24–30 are excised as a propeptide; that stretch reads KPVQQWA. Gln31 bears the Pyrrolidone carboxylic acid mark. Residues 41 to 47 constitute a propeptide that is removed on maturation; that stretch reads LLVQQWA. A Pyrrolidone carboxylic acid modification is found at Gln48. Positions 61-67 are excised as a propeptide; sequence LTVQQWA. The residue at position 68 (Gln68) is a Pyrrolidone carboxylic acid. The propeptide occupies 78–84; that stretch reads LTVQQWA. The segment at 81–110 is disordered; the sequence is QQWAQGRPPGPPIPPLTVQQWAQARPPHPP. Gln85 is modified (pyrrolidone carboxylic acid). A propeptide spanning residues 96–102 is cleaved from the precursor; the sequence is LTVQQWA. Gln103 is subject to Pyrrolidone carboxylic acid. Positions 114–116 are excised as a propeptide; sequence APL. Gln117 carries the pyrrolidone carboxylic acid modification. A propeptide is located at residue Val122. Pyrrolidone carboxylic acid is present on Gln123. Positions 128-144 are excised as a propeptide; it reads VQKWAPVQKWAPLLQPT.

The protein in the N-terminal section; belongs to the bradykinin-potentiating peptide family. In terms of tissue distribution, expressed by venom gland.

The protein resides in the secreted. The protein localises to the cytoplasm. It is found in the cytosol. Its function is as follows. Peptide with several activities. It inhibits the activity of the angiotensin-converting enzyme (ACE) by a preferential interaction with its C-domain. It evokes transient hypotension (-14 mmHg) similar to that evoked by 0.5 ug of bradykinin, when injected alone into rats. It has a high bradykinin-potentiating effect (120%), when 60 nmol of BPP-10c are coinjected with 0.5 ug of bradykinin into rats. Does not affect angiotensin-1 pressor effects. Shows potent and long-lasting antihypertensive activity as well as a reduction of the heart rate. It also binds and dose-dependently promotes the activation of cytosolic argininosuccinate synthase (ASS1), an enzyme that catalyzes the conversion of citrulline, L-aspartate and ATP to argininosuccinate, AMP and pyrophosphate. It also enhances ASS1-dependent arginine production in HEK 293 cells, as well as in spontaneous hypertensive rat (SHR) and Wistar rat plasma. In addition, it induces the production of nitric-oxide (NO) by HUVEC cells via the endothelial nitric-oxide synthase (NOS3), which use arginine as a substrate and produce NO. It has been shown to be internalized by ASS1-expressing endothelial (HUVEC) and kidney (HEK 293) cells, and is detected homogenously distributed within the cell cytoplasm for up to 2 hours. Functionally, acts as indirect hypotensive agent. Increases leukocyte rolling flux and adhesion by five-fold in post-capillary venules, without any increments in vasodilation of arterioles. In terms of biological role, acts as indirect hypotensive agent. Potently induces vasodilation of arterioles, with only a small increase in leukocyte rolling flux. The sequence is that of Bradykinin-potentiating and C-type natriuretic peptides isoform 2 from Bothrops jararacussu (Jararacussu).